Consider the following 390-residue polypeptide: Elongation factor Tu 2 (390 aa).

One can recognise a tr-type G domain in the interval 10–203; the sequence is KPHLNIGTMG…AVDTYVPMPE (194 aa). The G1 stretch occupies residues 19-26; sequence GHVDHGKT. 19-26 provides a ligand contact to GTP; it reads GHVDHGKT. Mg(2+) is bound at residue Thr-26. The segment at 60-64 is G2; the sequence is GITIN. The G3 stretch occupies residues 81–84; it reads DMPG. Residues 81–85 and 136–139 each bind GTP; these read DMPGH and NKAD. Residues 136–139 are G4; that stretch reads NKAD. Residues 173-175 are G5; sequence SGL.

Belongs to the TRAFAC class translation factor GTPase superfamily. Classic translation factor GTPase family. EF-Tu/EF-1A subfamily. Monomer.

It is found in the cytoplasm. It catalyses the reaction GTP + H2O = GDP + phosphate + H(+). In terms of biological role, GTP hydrolase that promotes the GTP-dependent binding of aminoacyl-tRNA to the A-site of ribosomes during protein biosynthesis. This is Elongation factor Tu 2 from Streptomyces avermitilis (strain ATCC 31267 / DSM 46492 / JCM 5070 / NBRC 14893 / NCIMB 12804 / NRRL 8165 / MA-4680).